A 579-amino-acid polypeptide reads, in one-letter code: Folliculin (579 aa).

The interval glycine 32–cysteine 82 is disordered. Residues serine 62 and serine 73 each carry the phosphoserine modification. A uDENN FLCN/SMCR8-type domain is found at arginine 86–threonine 242. A coiled-coil region spans residues glutamate 287–alanine 310. The segment covering glutamate 294–glutamate 308 has biased composition (acidic residues). Residues glutamate 294–arginine 320 form a disordered region. Serine 302, serine 406, serine 537, serine 542, and serine 571 each carry phosphoserine. A cDENN FLCN/SMCR8-type domain is found at glutamine 339–threonine 491. The dDENN FLCN/SMCR8-type domain maps to glutamine 493–serine 558.

Belongs to the folliculin family. As to quaternary structure, interacts (via C-terminus) with FNIP1 or FNIP2 (via C-terminus). Component of the lysosomal folliculin complex (LFC), composed of FLCN, FNIP1 (or FNIP2), RagA/RRAGA or RagB/RRAGB GDP-bound, RagC/RRAGC or RagD/RRAGD GTP-bound, and Ragulator. Interaction with FNIP1 or FNIP2 mediates indirect interaction with the PRKAA1, PRKAB1 and PRKAG1 subunits of 5'-AMP-activated protein kinase (AMPK). Interacts with HSP90AA1 in the presence of FNIP1. Interacts with HSP70, STUB1, CDC37, AHSA1, CCT2, STIP1, PTGES3 and PPP5C. Interacts with GABARAP; interaction takes place in the presence of FNIP1 and/or FNIP2. Interacts with RILP; the interaction is direct and promotes association between RILP and RAB34. Interacts with KIF3A and KIF3B. Interacts with lactate dehydrogenase LDHA, but not LDHB; the interaction is direct, may preferentially bind LDHA dimers rather than tetramers, and regulates LDHA activity, acting as an uncompetitive inhibitor. In terms of processing, phosphorylation by ULK1 modulates the interaction with GABARAP and is required to regulate autophagy. In terms of tissue distribution, expressed in kidney.

The protein localises to the lysosome membrane. The protein resides in the cytoplasm. It localises to the cytosol. It is found in the cell projection. Its subcellular location is the cilium. The protein localises to the cytoskeleton. The protein resides in the microtubule organizing center. It localises to the centrosome. It is found in the spindle. Its subcellular location is the nucleus. With respect to regulation, GTPase-activating activity is inhibited in the folliculin complex (LFC), which stabilizes the GDP-bound state of RagA/RRAGA (or RagB/RRAGB), because Arg-164 is located far from the RagC/RRAGC or RagD/RRAGD nucleotide pocket. Disassembly of the LFC complex upon amino acid restimulation liberates the GTPase-activating activity. In terms of biological role, multi-functional protein, involved in both the cellular response to amino acid availability and in the regulation of glycolysis. GTPase-activating protein that plays a key role in the cellular response to amino acid availability through regulation of the non-canonical mTORC1 signaling cascade controlling the MiT/TFE factors TFEB and TFE3. Activates mTORC1 by acting as a GTPase-activating protein: specifically stimulates GTP hydrolysis by RagC/RRAGC or RagD/RRAGD, promoting the conversion to the GDP-bound state of RagC/RRAGC or RagD/RRAGD, and thereby activating the kinase activity of mTORC1. The GTPase-activating activity is inhibited during starvation and activated in presence of nutrients. Acts as a key component for non-canonical mTORC1-dependent control of the MiT/TFE factors TFEB and TFE3, while it is not involved in mTORC1-dependent phosphorylation of canonical RPS6KB1/S6K1 and EIF4EBP1/4E-BP1. In low-amino acid conditions, the lysosomal folliculin complex (LFC) is formed on the membrane of lysosomes, which inhibits the GTPase-activating activity of FLCN, inactivates mTORC1 and maximizes nuclear translocation of TFEB and TFE3. Upon amino acid restimulation, RagA/RRAGA (or RagB/RRAGB) nucleotide exchange promotes disassembly of the LFC complex and liberates the GTPase-activating activity of FLCN, leading to activation of mTORC1 and subsequent cytoplasmic retention of TFEB and TFE3. Indirectly acts as a positive regulator of Wnt signaling by promoting mTOR-dependent cytoplasmic retention of MiT/TFE factor TFE3. Required for the exit of hematopoietic stem cell from pluripotency by promoting mTOR-dependent cytoplasmic retention of TFE3, thereby increasing Wnt signaling. Involved in the control of embryonic stem cells differentiation; together with LAMTOR1 it is necessary to recruit and activate RagC/RRAGC and RagD/RRAGD at the lysosomes, and to induce exit of embryonic stem cells from pluripotency via non-canonical, mTOR-independent TFE3 inactivation. Acts as an inhibitor of browning of adipose tissue by regulating mTOR-dependent cytoplasmic retention of TFE3. In response to flow stress, regulates STK11/LKB1 accumulation and mTORC1 activation through primary cilia: may act by recruiting STK11/LKB1 to primary cilia for activation of AMPK resided at basal bodies, causing mTORC1 down-regulation. Together with FNIP1 and/or FNIP2, regulates autophagy: following phosphorylation by ULK1, interacts with GABARAP and promotes autophagy. Required for starvation-induced perinuclear clustering of lysosomes by promoting association of RILP with its effector RAB34. Regulates glycolysis by binding to lactate dehydrogenase LDHA, acting as an uncompetitive inhibitor. This is Folliculin from Rattus norvegicus (Rat).